The primary structure comprises 437 residues: MEAAGARNRDARSRAEKSPPESRKVYMDYNATTPLEPEVIEAMTEAMREAWGNPSSSYPAGRKAKEIINTARENLAKMIGGQPQDVIFTSGGTESNNLVIQSVVKHFHKVHAANGDTGGHPNPVDGALPHIITCTVEHDSIRLPLEHLREERVAEVTFVPVSKVNGQVEAEDILAAVRPATCLVTIMLANNETGVIMPVPEISRRVRALNQQRVAGGLPGVLVHTDAAQALGKQRVDVRDLGVDFLTIVGHKFYGPRIGALYVRGLGEHTPLYPMLFGGGQERNFRPGTENTPMIAGLGKAAELVAENGEAYEAHMRGVRDYLEERLAAEFGERIHLNSQFPGAERLPNTCNFSIRGPQLQGRAVLAQCRTLLASVGAACHSDLGDRPSPVLLSCGVPVDVARNAIRLSVGRSSTRAEVDLVVQDLKQAVARLEGQA.

At Met1 the chain carries N-acetylmethionine. Residues 1 to 30 (MEAAGARNRDARSRAEKSPPESRKVYMDYN) form a disordered region. The span at 7 to 26 (RNRDARSRAEKSPPESRKVY) shows a compositional bias: basic and acidic residues. Lys252 is subject to N6-(pyridoxal phosphate)lysine. Cys380 serves as the catalytic S-selanylcysteine intermediate.

Belongs to the class-V pyridoxal-phosphate-dependent aminotransferase family. Homodimer. The cofactor is pyridoxal 5'-phosphate.

It localises to the cytoplasm. It is found in the cytosol. The enzyme catalyses L-selenocysteine + AH2 = hydrogenselenide + L-alanine + A + H(+). Its function is as follows. Catalyzes the decomposition of L-selenocysteine to L-alanine and elemental selenium. This is Selenocysteine lyase (SCLY) from Bos taurus (Bovine).